Here is a 514-residue protein sequence, read N- to C-terminus: Ribonuclease Y (514 aa).

A helical membrane pass occupies residues 3 to 23; sequence YMIIYEIIAGILIVVAILIHF. The 86-residue stretch at 204–289 folds into the KH domain; the sequence is TVHVVTLPND…EMVEKAEKEL (86 aa). Residues 330–423 enclose the HD domain; it reads VLKHSVEVAY…VQAADAISAA (94 aa).

It belongs to the RNase Y family.

It is found in the cell membrane. Endoribonuclease that initiates mRNA decay. The protein is Ribonuclease Y of Clostridium kluyveri (strain ATCC 8527 / DSM 555 / NBRC 12016 / NCIMB 10680 / K1).